We begin with the raw amino-acid sequence, 269 residues long: Hydroxyethylthiazole kinase (269 aa).

Methionine 45 is a substrate binding site. Residues arginine 121 and threonine 167 each coordinate ATP. Glycine 194 serves as a coordination point for substrate.

It belongs to the Thz kinase family. Requires Mg(2+) as cofactor.

It carries out the reaction 5-(2-hydroxyethyl)-4-methylthiazole + ATP = 4-methyl-5-(2-phosphooxyethyl)-thiazole + ADP + H(+). It functions in the pathway cofactor biosynthesis; thiamine diphosphate biosynthesis; 4-methyl-5-(2-phosphoethyl)-thiazole from 5-(2-hydroxyethyl)-4-methylthiazole: step 1/1. Its function is as follows. Catalyzes the phosphorylation of the hydroxyl group of 4-methyl-5-beta-hydroxyethylthiazole (THZ). This chain is Hydroxyethylthiazole kinase, found in Brevibacillus brevis (strain 47 / JCM 6285 / NBRC 100599).